Here is a 254-residue protein sequence, read N- to C-terminus: Chalcone isomerase cfoK (254 aa).

Active-site residues include His33 and Tyr50.

It carries out the reaction a chalcone = a flavanone.. The protein operates within secondary metabolite biosynthesis; flavonoid biosynthesis. Chalcone isomerase; part of the gene cluster that mediates the biosynthesis of chlorflavonin, a fungal flavonoid with acetolactate synthase inhibitory activity. Within the pathway, cfoK acts as chalcone isomerase (CHI), the key enzyme responsible for the tricyclic formation of flavanone through Michael-type intramolecular cyclization of chalcone. The hydrogen at C2'-OH is extracted by the imidazole ring of His-33, which induces the oxa-Michael addition to form the intermediate enolate through 6-endo-trig mode cyclization. The enolate can then be stabilized by a hydrogen bond with the Tyr-50 residue. Following enol tautomerization, the C ring, a gamma-pyranone ring, is formed. The pathway begins with the PKS-NRPS hybrid synthetase cfoA that uses benzoic acid or p-hydroxybenzoic acid as a starter unit with four rounds of chain elongation using malonyl-CoA to form the chalcone skeleton. Then, a new type of chalcone isomerase, cfoK, catalyzes the conversion of the chalcone into a flavanone by a histidine-mediated oxa-Michael addition mechanism. The desaturation of flavanone to flavone is catalyzed by a new type of flavone synthase, the flavin mononucleotide (FMN)-dependent oxidoreductase cfoJ. Monooxygenases cfoF, cfoG, and P450 cfoH are responsible for the hydroxylation of the flavonoid skeleton at sites C3, C8, and C2', respectively. Like cfoF, the dehydratase cfoI plays also a role in the hydroxylation of position C3. Methyltransferases cfoB, cfoC, and cfoD then catalyze the methylation of C7-OH, C8-OH, and C3-OH, respectively. Finally, the monooxygenase cfoE is responsible for the chlorination of flavonoid at position C3'. The polypeptide is Chalcone isomerase cfoK (Aspergillus candidus).